We begin with the raw amino-acid sequence, 216 residues long: Uracil-DNA glycosylase (216 aa).

Catalysis depends on Asp59, which acts as the Proton acceptor.

The protein belongs to the uracil-DNA glycosylase (UDG) superfamily. UNG family.

It is found in the cytoplasm. The enzyme catalyses Hydrolyzes single-stranded DNA or mismatched double-stranded DNA and polynucleotides, releasing free uracil.. In terms of biological role, excises uracil residues from the DNA which can arise as a result of misincorporation of dUMP residues by DNA polymerase or due to deamination of cytosine. The polypeptide is Uracil-DNA glycosylase (Staphylococcus epidermidis (strain ATCC 35984 / DSM 28319 / BCRC 17069 / CCUG 31568 / BM 3577 / RP62A)).